Reading from the N-terminus, the 496-residue chain is MTKLQQTLYQFFGFTSFKKGQQDIIESILSGKDTIAMLPTGGGKSLCYQLPGYMLDGMVLIVSPLLSLMEDQVQQLKARGEKRAAALNSMLNRQERQFVLEHIHRYKFLYLSPEALQSPYVLEKLKSVPISLFVIDEAHCISEWGHDFRPDYSKLGQLRKKLGHPPVLALTATATKETLQDVMNLLELQHAVRHLNSVNRPNIALRVENAADTAEKIDRVIQLVENLQGPGIVYCPTRKWAKELAGEIKSKTSSRADFYHGGLESGDRILIQQQFIHNQLDVICCTNAFGMGVDKPDIRYVIHFHLPQTAEAFMQEIGRAGRDGKPSVSILLRAPGDFELQEQIIQMESVTAEEIADVIRVLEKTEERDERRLRDVLLQYGVGETQARMMIHLFMQGKTSVELMKKEISYRMELKLEKMHRVSFLLQRDGCLRQALLTYFDESYEPDDGNLPCCSHCGFDLSLYEQKGERSKMAPLDSWSSELHRIFSLQTVGELN.

Residues 25-192 enclose the Helicase ATP-binding domain; sequence IESILSGKDT…MNLLELQHAV (168 aa). ATP is bound at residue 38–45; sequence LPTGGGKS. Positions 136–139 match the DEAH box motif; the sequence is DEAH. A Helicase C-terminal domain is found at 219–363; it reads RVIQLVENLQ…EIADVIRVLE (145 aa).

This sequence belongs to the helicase family. RecQ subfamily. Interacts with SSB (ssbA) and YpbB.

The protein localises to the cytoplasm. Its subcellular location is the nucleoid. It catalyses the reaction Couples ATP hydrolysis with the unwinding of duplex DNA by translocating in the 3'-5' direction.. The catalysed reaction is ATP + H2O = ADP + phosphate + H(+). Functionally, probable 3'-5' DNA helicase. Required in synaptic and/or post-synaptic stages of recombination. Probably has an overlapping function with RecQ. It probably acts to help generate ss-DNA from ds-DNA breaks. The polypeptide is Probable ATP-dependent DNA helicase RecS (Bacillus subtilis (strain 168)).